Consider the following 121-residue polypeptide: Large ribosomal subunit protein bL20 (121 aa).

Belongs to the bacterial ribosomal protein bL20 family.

Functionally, binds directly to 23S ribosomal RNA and is necessary for the in vitro assembly process of the 50S ribosomal subunit. It is not involved in the protein synthesizing functions of that subunit. The chain is Large ribosomal subunit protein bL20 from Sphingopyxis alaskensis (strain DSM 13593 / LMG 18877 / RB2256) (Sphingomonas alaskensis).